We begin with the raw amino-acid sequence, 72 residues long: ATP synthase subunit c (72 aa).

2 helical membrane passes run 4–24 (ALGAGLAVSIAGIGGGIGMGI) and 46–66 (LLFITLAFIETLTIYGLLIAF).

The protein belongs to the ATPase C chain family. In terms of assembly, F-type ATPases have 2 components, F(1) - the catalytic core - and F(0) - the membrane proton channel. F(1) has five subunits: alpha(3), beta(3), gamma(1), delta(1), epsilon(1). F(0) has three main subunits: a(1), b(2) and c(10-14). The alpha and beta chains form an alternating ring which encloses part of the gamma chain. F(1) is attached to F(0) by a central stalk formed by the gamma and epsilon chains, while a peripheral stalk is formed by the delta and b chains.

Its subcellular location is the cell membrane. F(1)F(0) ATP synthase produces ATP from ADP in the presence of a proton or sodium gradient. F-type ATPases consist of two structural domains, F(1) containing the extramembraneous catalytic core and F(0) containing the membrane proton channel, linked together by a central stalk and a peripheral stalk. During catalysis, ATP synthesis in the catalytic domain of F(1) is coupled via a rotary mechanism of the central stalk subunits to proton translocation. In terms of biological role, key component of the F(0) channel; it plays a direct role in translocation across the membrane. A homomeric c-ring of between 10-14 subunits forms the central stalk rotor element with the F(1) delta and epsilon subunits. The protein is ATP synthase subunit c of Syntrophomonas wolfei subsp. wolfei (strain DSM 2245B / Goettingen).